The primary structure comprises 1482 residues: Type VII secretion system protein EssC (1482 aa).

The Cytoplasmic portion of the chain corresponds to 1-229; it reads MHKLIIKYNK…RPPQPIQKNN (229 aa). The helical transmembrane segment at 230-252 threads the bilayer; sequence TVIWRSIIPPLVMIALTVVIFLV. Residues 253 to 256 are Extracellular-facing; that stretch reads RPIG. A helical transmembrane segment spans residues 257–279; sequence IYILMMIGMSTVTIVFGITTYFS. The Cytoplasmic segment spans residues 280–1482; that stretch reads EKKKYNKDVE…EYQKIKLMEG (1203 aa). FtsK domains are found at residues 652–846 and 997–1183; these read DDIL…QDSN and QGPM…NELT. Residues 672-679 and 1014-1021 contribute to the ATP site; these read GTTGSGKS and GSPGYGRT.

This sequence belongs to the EssC family. As to quaternary structure, homooligomer. Interacts with EsaE.

The protein resides in the cell membrane. In terms of biological role, component of the type VII secretion system (Ess). Required for the secretion of substrates including EsxA and EsxB. However, unable to support secretion of the substrate protein EsxC. The sequence is that of Type VII secretion system protein EssC from Staphylococcus aureus (strain MRSA252).